Reading from the N-terminus, the 423-residue chain is Serine--tRNA ligase 2 (423 aa).

231 to 233 (TAE) contacts L-serine. Position 262–264 (262–264 (RSE)) interacts with ATP. Glu-285 serves as a coordination point for L-serine. Position 349-352 (349-352 (EISS)) interacts with ATP. L-serine is bound at residue Ser-384.

It belongs to the class-II aminoacyl-tRNA synthetase family. Type-1 seryl-tRNA synthetase subfamily. As to quaternary structure, homodimer. The tRNA molecule binds across the dimer.

Its subcellular location is the cytoplasm. The enzyme catalyses tRNA(Ser) + L-serine + ATP = L-seryl-tRNA(Ser) + AMP + diphosphate + H(+). The catalysed reaction is tRNA(Sec) + L-serine + ATP = L-seryl-tRNA(Sec) + AMP + diphosphate + H(+). Its pathway is aminoacyl-tRNA biosynthesis; selenocysteinyl-tRNA(Sec) biosynthesis; L-seryl-tRNA(Sec) from L-serine and tRNA(Sec): step 1/1. Its function is as follows. Catalyzes the attachment of serine to tRNA(Ser). Is also able to aminoacylate tRNA(Sec) with serine, to form the misacylated tRNA L-seryl-tRNA(Sec), which will be further converted into selenocysteinyl-tRNA(Sec). This is Serine--tRNA ligase 2 from Enterococcus faecalis (strain ATCC 700802 / V583).